The sequence spans 239 residues: MKFYDLMCKAAQDVGLELSKEQYEKFIIYKNLLQEWNEKVNLTAITEDEEIIKKHFIDSIKAFKRDEFKEAKTLIDVGTGAGFPGIPVAIMNENIQVTLLDSLNKRVNFLNLVTEKLGLKNVVAIHSRAEDGARQKNLRESFDIATSRAVANMSVLSEFCLPYVKINGHFIALKGPAVEEEIKDSDKAITTLGGQLLDICEVEIEDTELKHNLVVVKKIKECPKAYPRKAGNVTKKPIK.

S-adenosyl-L-methionine is bound by residues glycine 78, phenylalanine 83, 129 to 130 (AE), and arginine 148.

The protein belongs to the methyltransferase superfamily. RNA methyltransferase RsmG family.

Its subcellular location is the cytoplasm. Its function is as follows. Specifically methylates the N7 position of a guanine in 16S rRNA. This is Ribosomal RNA small subunit methyltransferase G from Clostridium botulinum (strain Eklund 17B / Type B).